We begin with the raw amino-acid sequence, 803 residues long: Bromodomain-containing protein 2 (803 aa).

At Met1 the chain carries N-acetylmethionine. Residue Thr6 is modified to Phosphothreonine. Ser37 is subject to Phosphoserine. The tract at residues 53-73 is disordered; sequence ALQLTPANPPPPEVSNPKKPG. The region spanning 74-180 is the Bromo 1 domain; that stretch reads RVTNQLQYLH…KIFLQKVASM (107 aa). A protein is bound by residues Asp112, Tyr155, Asn156, Lys157, Asp160, and Asp161. Disordered regions lie at residues 268–348, 456–652, and 739–803; these read PPAQ…KLSE, EPLE…KRQL, and EKRL…SDSG. Positions 285 to 298 are enriched in low complexity; it reads TTTPTPTAILAPGS. 2 positions are modified to phosphoserine: Ser298 and Ser301. Residues 316–332 show a composition bias toward basic and acidic residues; sequence VRRESGRPIKPPRKDLP. Positions 344-453 constitute a Bromo 2 domain; it reads GKLSEQLKHC…DVFEFRYAKM (110 aa). Residues 481-515 show a composition bias toward acidic residues; that stretch reads SSEESSSESSSEEEEEEDEDEEEEEEESESSDSEE. Residues 545-567 are compositionally biased toward basic residues; the sequence is KPKRKREKKEKKKKRKAEKHRGR. Positions 556–560 match the Nuclear localization signal motif; it reads KKKRK. The segment covering 623 to 632 has biased composition (low complexity); it reads KTAPPALPAG. The 83-residue stretch at 634 to 716 folds into the NET domain; it reads DSEEEEESRP…SCLRKKPRKP (83 aa). Ser635 carries the post-translational modification Phosphoserine. Positions 641-652 are enriched in basic and acidic residues; it reads SRPMSYDEKRQL. Low complexity predominate over residues 777–797; sequence SASSSSSDSSSSSSSSSSSDT.

It belongs to the BET family. Homodimer. Interacts with E2F1. Interacts with (acetylated) STAT3; promoting STAT3 recruitment to chromatin. Interacts with CTCF; promoting BRD2 recruitment to chromatin.

Its subcellular location is the nucleus. The protein localises to the chromosome. In terms of biological role, chromatin reader protein that specifically recognizes and binds histone H4 acetylated at 'Lys-5' and 'Lys-12' (H4K5ac and H4K12ac, respectively), thereby controlling gene expression and remodeling chromatin structures. Recruits transcription factors and coactivators to target gene sites, and activates RNA polymerase II machinery for transcriptional elongation. Plays a key role in genome compartmentalization via its association with CTCF and cohesin: recruited to chromatin by CTCF and promotes formation of topologically associating domains (TADs) via its ability to bind acetylated histones, contributing to CTCF boundary formation and enhancer insulation. Also recognizes and binds acetylated non-histone proteins, such as STAT3. Involved in inflammatory response by regulating differentiation of naive CD4(+) T-cells into T-helper Th17: recognizes and binds STAT3 acetylated at 'Lys-87', promoting STAT3 recruitment to chromatin. In addition to acetylated lysines, also recognizes and binds lysine residues on histones that are both methylated and acetylated on the same side chain to form N6-acetyl-N6-methyllysine (Kacme), an epigenetic mark of active chromatin associated with increased transcriptional initiation. Specifically binds histone H4 acetyl-methylated at 'Lys-5' and 'Lys-12' (H4K5acme and H4K12acme, respectively). This Bos taurus (Bovine) protein is Bromodomain-containing protein 2 (BRD2).